A 329-amino-acid chain; its full sequence is DNA repair and recombination protein RadA (329 aa).

107-114 (GEFGSGKS) is a binding site for ATP.

It belongs to the eukaryotic RecA-like protein family.

Functionally, involved in DNA repair and in homologous recombination. Binds and assemble on single-stranded DNA to form a nucleoprotein filament. Hydrolyzes ATP in a ssDNA-dependent manner and promotes DNA strand exchange between homologous DNA molecules. The chain is DNA repair and recombination protein RadA from Methanocorpusculum labreanum (strain ATCC 43576 / DSM 4855 / Z).